We begin with the raw amino-acid sequence, 131 residues long: Fluoride-specific ion channel FluC (131 aa).

The next 3 helical transmembrane spans lie at A3–L23, I34–G54, and A62–L82. Residues G80 and T83 each contribute to the Na(+) site. A helical transmembrane segment spans residues W101–I121.

This sequence belongs to the fluoride channel Fluc/FEX (TC 1.A.43) family.

Its subcellular location is the cell inner membrane. The catalysed reaction is fluoride(in) = fluoride(out). Its activity is regulated as follows. Na(+) is not transported, but it plays an essential structural role and its presence is essential for fluoride channel function. Functionally, fluoride-specific ion channel. Important for reducing fluoride concentration in the cell, thus reducing its toxicity. The polypeptide is Fluoride-specific ion channel FluC (Aromatoleum aromaticum (strain DSM 19018 / LMG 30748 / EbN1) (Azoarcus sp. (strain EbN1))).